The chain runs to 554 residues: Sesquithujene synthase A (554 aa).

Mg(2+) is bound by residues Asp-308 and Asp-312. Substrate is bound by residues Asp-308 and Asp-312. Residues 308 to 312 carry the DDXXD motif motif; it reads DDMFD. The interval 407–411 is determine the stereoselectivity of the enzyme; it reads SIGAN. Arg-449 and Asn-452 together coordinate substrate. Positions 452, 456, and 460 each coordinate Mg(2+).

The protein belongs to the terpene synthase family. As to quaternary structure, monomer. It depends on Mg(2+) as a cofactor. The cofactor is Mn(2+). Highly expressed in the husk. Detected in leaves.

The protein localises to the cytoplasm. The enzyme catalyses (2E,6E)-farnesyl diphosphate = sesquithujene + diphosphate. The catalysed reaction is (2Z,6Z)-farnesyl diphosphate = (1S,5S,6S)-alpha-bergamotene + diphosphate. It carries out the reaction (2E,6E)-farnesyl diphosphate = (E)-beta-farnesene + diphosphate. It catalyses the reaction (2E,6E)-farnesyl diphosphate = (S)-beta-bisabolene + diphosphate. The enzyme catalyses (2Z,6E)-farnesyl diphosphate = (-)-beta-curcumene + diphosphate. The catalysed reaction is (2E,6E)-farnesyl diphosphate = gamma-curcumene + diphosphate. It carries out the reaction (2E,6E)-farnesyl diphosphate = sesquisabinene B + diphosphate. Its pathway is secondary metabolite biosynthesis; terpenoid biosynthesis. In terms of biological role, sesquiterpene synthase involved in the production after herbivore attack of a blend of volatiles that attracts natural enemies of herbivores. Converts farnesyl diphosphate to sesquithujene, (S)-beta-bisabolene, (Z)-alpha-bergamotene, sesquisabinene B and several minor products. Can also act in vitro as a monoterpene synthase, converting geranyl diphosphate to (S)-(-)-limonene, beta-myrcene and 11 other monoterpenes. The chain is Sesquithujene synthase A from Zea mays (Maize).